We begin with the raw amino-acid sequence, 379 residues long: Cytokine receptor common subunit gamma (379 aa).

Positions M1–G22 are cleaved as a signal peptide. The Extracellular portion of the chain corresponds to L23–S269. A disulfide bond links C68 and C78. N-linked (GlcNAc...) asparagine glycans are attached at residues N77, N81, and N90. A disulfide bridge connects residues C109 and C122. Positions A163–E260 constitute a Fibronectin type-III domain. N-linked (GlcNAc...) asparagine glycans are attached at residues N166 and N171. Positions W244 to S248 match the WSXWS motif motif. A helical membrane pass occupies residues L270–I290. Residues C291–P379 lie on the Cytoplasmic side of the membrane. Positions T299–K307 match the Box 1 motif motif. T305 carries the post-translational modification Phosphothreonine. The disordered stretch occupies residues P349–P370.

Belongs to the type I cytokine receptor family. Type 5 subfamily. In terms of assembly, the gamma subunit is common to the IL2, IL4, IL7, IL15, IL21 and probably also the IL13 receptors. Interacts with SHB upon interleukin stimulation.

The protein resides in the cell membrane. It localises to the cell surface. Its function is as follows. Common subunit for the receptors for a variety of interleukins. Probably in association with IL15RA, involved in the stimulation of neutrophil phagocytosis by IL15. In Bos taurus (Bovine), this protein is Cytokine receptor common subunit gamma (IL2RG).